Consider the following 434-residue polypeptide: ATP-dependent protease ATPase subunit HslU (434 aa).

ATP is bound by residues I18, G60–E65, D247, E312, and R384.

It belongs to the ClpX chaperone family. HslU subfamily. As to quaternary structure, a double ring-shaped homohexamer of HslV is capped on each side by a ring-shaped HslU homohexamer. The assembly of the HslU/HslV complex is dependent on binding of ATP.

The protein resides in the cytoplasm. ATPase subunit of a proteasome-like degradation complex; this subunit has chaperone activity. The binding of ATP and its subsequent hydrolysis by HslU are essential for unfolding of protein substrates subsequently hydrolyzed by HslV. HslU recognizes the N-terminal part of its protein substrates and unfolds these before they are guided to HslV for hydrolysis. The sequence is that of ATP-dependent protease ATPase subunit HslU from Brucella ovis (strain ATCC 25840 / 63/290 / NCTC 10512).